The sequence spans 907 residues: Leucine-rich repeat-containing G-protein coupled receptor 5 (907 aa).

The N-terminal stretch at 1–21 (MDTSRLGVLLSLPVLLQLATG) is a signal peptide. Topologically, residues 22–561 (GSSPRSGVLL…EHLLDGWLIR (540 aa)) are extracellular. Positions 25–66 (PRSGVLLRGCPTHCHCEPDGRMLLRVDCSDLGLSELPSNLSV) constitute an LRRNT domain. 2 disulfide bridges follow: Cys-34/Cys-40 and Cys-38/Cys-52. 2 N-linked (GlcNAc...) asparagine glycosylation sites follow: Asn-63 and Asn-77. LRR repeat units lie at residues 67–90 (FTSY…PSLR), 91–112 (FLEE…AFTG), 115–136 (SLKV…ALQN), 139–160 (SLQS…CFSG), 163–184 (SLRH…AFRS), 187–208 (ALQA…AFGN), 211–232 (SLVV…CFDG), 235–256 (SLET…IRTL), 258–279 (NLKE…AFVG), 282–303 (SLIT…AFQH), 306–328 (ELRT…TGTA), 329–350 (NLES…VCNQ), 353–374 (NLQV…SVCQ), 375–396 (KLQK…TFQQ), 399–420 (SLRS…AFST), and 423–446 (SLIK…HGLT). A glycan (N-linked (GlcNAc...) asparagine) is linked at Asn-208. A disulfide bridge connects residues Cys-348 and Cys-373. The cysteines at positions 479 and 541 are disulfide-linked. N-linked (GlcNAc...) asparagine glycosylation is present at Asn-500. The helical transmembrane segment at 562–582 (IGVWTIAVLALTCNALVTSTV) threads the bilayer. Residues 583–593 (FRSPLYISPIK) lie on the Cytoplasmic side of the membrane. The helical transmembrane segment at 594–614 (LLIGVIAAVNMLTGVSSAVLA) threads the bilayer. At 615–638 (GVDAFTFGSFARHGAWWENGVGCH) the chain is on the extracellular side. The cysteines at positions 637 and 712 are disulfide-linked. The helical transmembrane segment at 639 to 659 (VIGFLSIFASESSVFLLTLAA) threads the bilayer. Residues 660 to 682 (LERGFSVKYSAKFETKAPFSSLK) lie on the Cytoplasmic side of the membrane. A helical membrane pass occupies residues 683–703 (VIILLCALLALTMAAVPLLGG). The Extracellular portion of the chain corresponds to 704–722 (SKYGASPLCLPLPFGEPST). Residues 723–743 (MGYMVALILLNSLCFLMMTIA) traverse the membrane as a helical segment. Residues 744–767 (YTKLYCNLDKGDLENIWDCSMVKH) are Cytoplasmic-facing. A helical membrane pass occupies residues 768–788 (IALLLFTNCILNCPVAFLSFS). Topologically, residues 789–802 (SLINLTFISPEVIK) are extracellular. Asn-792 carries an N-linked (GlcNAc...) asparagine glycan. A helical membrane pass occupies residues 803-823 (FILLVVVPLPACLNPLLYILF). Topologically, residues 824–907 (NPHFKEDLVS…LSSVAFVPCL (84 aa)) are cytoplasmic.

This sequence belongs to the G-protein coupled receptor 1 family. Identified in a complex composed of RNF43, LGR5 and RSPO1. Also interacts with other R-spondin ligands, including RSPO2, RSPO3 and RSPO4. As to expression, expressed in skeletal muscle, placenta, spinal cord, and various region of brain. Expressed at the base of crypts in colonic and small mucosa stem cells. In premalignant cancer expression is not restricted to the cript base. Overexpressed in cancers of the ovary, colon and liver.

The protein resides in the cell membrane. The protein localises to the golgi apparatus. It localises to the trans-Golgi network membrane. Functionally, receptor for R-spondins that potentiates the canonical Wnt signaling pathway and acts as a stem cell marker of the intestinal epithelium and the hair follicle. Upon binding to R-spondins (RSPO1, RSPO2, RSPO3 or RSPO4), associates with phosphorylated LRP6 and frizzled receptors that are activated by extracellular Wnt receptors, triggering the canonical Wnt signaling pathway to increase expression of target genes. In contrast to classical G-protein coupled receptors, does not activate heterotrimeric G-proteins to transduce the signal. Involved in the development and/or maintenance of the adult intestinal stem cells during postembryonic development. This chain is Leucine-rich repeat-containing G-protein coupled receptor 5 (LGR5), found in Homo sapiens (Human).